The primary structure comprises 484 residues: Protein nucleotidyltransferase YdiU (484 aa).

The ATP site is built by G81, G83, R84, K103, D115, G116, R166, and R173. The Proton acceptor role is filled by D244. Positions 245 and 254 each coordinate Mg(2+). D254 lines the ATP pocket.

Belongs to the SELO family. Mg(2+) serves as cofactor. It depends on Mn(2+) as a cofactor.

The catalysed reaction is L-seryl-[protein] + ATP = 3-O-(5'-adenylyl)-L-seryl-[protein] + diphosphate. The enzyme catalyses L-threonyl-[protein] + ATP = 3-O-(5'-adenylyl)-L-threonyl-[protein] + diphosphate. It catalyses the reaction L-tyrosyl-[protein] + ATP = O-(5'-adenylyl)-L-tyrosyl-[protein] + diphosphate. It carries out the reaction L-histidyl-[protein] + UTP = N(tele)-(5'-uridylyl)-L-histidyl-[protein] + diphosphate. The catalysed reaction is L-seryl-[protein] + UTP = O-(5'-uridylyl)-L-seryl-[protein] + diphosphate. The enzyme catalyses L-tyrosyl-[protein] + UTP = O-(5'-uridylyl)-L-tyrosyl-[protein] + diphosphate. Functionally, nucleotidyltransferase involved in the post-translational modification of proteins. It can catalyze the addition of adenosine monophosphate (AMP) or uridine monophosphate (UMP) to a protein, resulting in modifications known as AMPylation and UMPylation. In Shewanella baltica (strain OS155 / ATCC BAA-1091), this protein is Protein nucleotidyltransferase YdiU.